Reading from the N-terminus, the 179-residue chain is Inosine/xanthosine triphosphatase (179 aa).

E71 serves as a coordination point for Mg(2+). Residue 71–72 (EA) participates in substrate binding.

The protein belongs to the YjjX NTPase family. In terms of assembly, homodimer. The cofactor is Mg(2+). Mn(2+) serves as cofactor.

The catalysed reaction is XTP + H2O = XDP + phosphate + H(+). The enzyme catalyses ITP + H2O = IDP + phosphate + H(+). In terms of biological role, phosphatase that hydrolyzes non-canonical purine nucleotides such as XTP and ITP to their respective diphosphate derivatives. Probably excludes non-canonical purines from DNA/RNA precursor pool, thus preventing their incorporation into DNA/RNA and avoiding chromosomal lesions. The sequence is that of Inosine/xanthosine triphosphatase from Shewanella sp. (strain MR-7).